A 101-amino-acid chain; its full sequence is Small ribosomal subunit protein uS14 (101 aa).

The protein belongs to the universal ribosomal protein uS14 family. Part of the 30S ribosomal subunit. Contacts proteins S3 and S10.

Binds 16S rRNA, required for the assembly of 30S particles and may also be responsible for determining the conformation of the 16S rRNA at the A site. The chain is Small ribosomal subunit protein uS14 from Shewanella amazonensis (strain ATCC BAA-1098 / SB2B).